We begin with the raw amino-acid sequence, 57 residues long: Large ribosomal subunit protein bL32 (57 aa).

The segment covering 1–20 (MAVPKKKTSKAKRDQRRATW) has biased composition (basic residues). The tract at residues 1-24 (MAVPKKKTSKAKRDQRRATWRRQA) is disordered.

Belongs to the bacterial ribosomal protein bL32 family.

The chain is Large ribosomal subunit protein bL32 from Gloeothece citriformis (strain PCC 7424) (Cyanothece sp. (strain PCC 7424)).